The primary structure comprises 353 residues: Holliday junction branch migration complex subunit RuvB (353 aa).

A large ATPase domain (RuvB-L) region spans residues 4-190 (HYIRFKIMTN…FGIPMRLNFY (187 aa)). ATP is bound by residues Ile-29, Arg-30, Gly-71, Lys-74, Thr-75, Thr-76, 137–139 (EDF), Arg-180, Tyr-190, and Arg-227. Residue Thr-75 coordinates Mg(2+). Residues 191 to 261 (NTEELKKVLN…ISDFGLNRLE (71 aa)) are small ATPAse domain (RuvB-S). The interval 264-353 (RIGLDSNDYR…HQFNIFNEHE (90 aa)) is head domain (RuvB-H). DNA contacts are provided by Arg-300, Arg-319, and Arg-324.

This sequence belongs to the RuvB family. In terms of assembly, homohexamer. Forms an RuvA(8)-RuvB(12)-Holliday junction (HJ) complex. HJ DNA is sandwiched between 2 RuvA tetramers; dsDNA enters through RuvA and exits via RuvB. An RuvB hexamer assembles on each DNA strand where it exits the tetramer. Each RuvB hexamer is contacted by two RuvA subunits (via domain III) on 2 adjacent RuvB subunits; this complex drives branch migration. In the full resolvosome a probable DNA-RuvA(4)-RuvB(12)-RuvC(2) complex forms which resolves the HJ.

It localises to the cytoplasm. It carries out the reaction ATP + H2O = ADP + phosphate + H(+). Functionally, the RuvA-RuvB-RuvC complex processes Holliday junction (HJ) DNA during genetic recombination and DNA repair, while the RuvA-RuvB complex plays an important role in the rescue of blocked DNA replication forks via replication fork reversal (RFR). RuvA specifically binds to HJ cruciform DNA, conferring on it an open structure. The RuvB hexamer acts as an ATP-dependent pump, pulling dsDNA into and through the RuvAB complex. RuvB forms 2 homohexamers on either side of HJ DNA bound by 1 or 2 RuvA tetramers; 4 subunits per hexamer contact DNA at a time. Coordinated motions by a converter formed by DNA-disengaged RuvB subunits stimulates ATP hydrolysis and nucleotide exchange. Immobilization of the converter enables RuvB to convert the ATP-contained energy into a lever motion, pulling 2 nucleotides of DNA out of the RuvA tetramer per ATP hydrolyzed, thus driving DNA branch migration. The RuvB motors rotate together with the DNA substrate, which together with the progressing nucleotide cycle form the mechanistic basis for DNA recombination by continuous HJ branch migration. Branch migration allows RuvC to scan DNA until it finds its consensus sequence, where it cleaves and resolves cruciform DNA. The polypeptide is Holliday junction branch migration complex subunit RuvB (Rickettsia massiliae (strain Mtu5)).